We begin with the raw amino-acid sequence, 69 residues long: Large ribosomal subunit protein uL29 (69 aa).

Belongs to the universal ribosomal protein uL29 family.

This is Large ribosomal subunit protein uL29 from Clostridium perfringens (strain ATCC 13124 / DSM 756 / JCM 1290 / NCIMB 6125 / NCTC 8237 / Type A).